We begin with the raw amino-acid sequence, 1397 residues long: Probable cyclin-dependent serine/threonine-protein kinase DDB_G0292550 (1397 aa).

A Protein kinase domain is found at 4-287 (FQIIELIGSG…TKEALNHPWF (284 aa)). Residues 10–18 (IGSGSYGKV) and K33 contribute to the ATP site. D124 acts as the Proton acceptor in catalysis. 8 disordered regions span residues 412-567 (NNNN…NNNN), 671-728 (PLSI…NNGF), 763-831 (NEMG…NGNN), 845-949 (NNNN…YANH), 996-1101 (NGLA…NTHN), 1115-1174 (NNGF…NSPV), 1227-1324 (NSAS…SFGL), and 1340-1397 (KKKK…IVLD). Residues 676–715 (SQHHNTSSSDTHNNNNNNYNNNNNNNNNINNNNINSIHNQ) are compositionally biased toward low complexity. Low complexity-rich tracts occupy residues 845–941 (NNNN…NGNG), 1012–1021 (NSNNNNSGNN), 1028–1101 (NTFN…NTHN), and 1115–1155 (NNGF…TKNN). Residues 1156-1171 (TQFGPNILSSTQTSHN) show a composition bias toward polar residues. Low complexity-rich tracts occupy residues 1253-1321 (NNNN…NNNS) and 1354-1380 (SSSQ…SQTQ).

This sequence belongs to the protein kinase superfamily. CMGC Ser/Thr protein kinase family. CDC2/CDKX subfamily.

The catalysed reaction is L-seryl-[protein] + ATP = O-phospho-L-seryl-[protein] + ADP + H(+). The enzyme catalyses L-threonyl-[protein] + ATP = O-phospho-L-threonyl-[protein] + ADP + H(+). The chain is Probable cyclin-dependent serine/threonine-protein kinase DDB_G0292550 from Dictyostelium discoideum (Social amoeba).